Here is a 398-residue protein sequence, read N- to C-terminus: 4-hydroxy-3-methylbut-2-en-1-yl diphosphate synthase (ferredoxin) (398 aa).

Residues Cys-306, Cys-309, Cys-340, and Glu-347 each contribute to the [4Fe-4S] cluster site.

It belongs to the IspG family. [4Fe-4S] cluster serves as cofactor.

The enzyme catalyses (2E)-4-hydroxy-3-methylbut-2-enyl diphosphate + 2 oxidized [2Fe-2S]-[ferredoxin] + H2O = 2-C-methyl-D-erythritol 2,4-cyclic diphosphate + 2 reduced [2Fe-2S]-[ferredoxin] + H(+). It functions in the pathway isoprenoid biosynthesis; isopentenyl diphosphate biosynthesis via DXP pathway; isopentenyl diphosphate from 1-deoxy-D-xylulose 5-phosphate: step 5/6. Converts 2C-methyl-D-erythritol 2,4-cyclodiphosphate (ME-2,4cPP) into 1-hydroxy-2-methyl-2-(E)-butenyl 4-diphosphate. This is 4-hydroxy-3-methylbut-2-en-1-yl diphosphate synthase (ferredoxin) from Parasynechococcus marenigrum (strain WH8102).